Reading from the N-terminus, the 216-residue chain is Probable GTP-binding protein EngB (216 aa).

An EngB-type G domain is found at 24–205; that stretch reads ATPEIAFVGR…WARLAALAAE (182 aa). Residues 32 to 39, 59 to 63, 86 to 89, 153 to 156, and 184 to 186 contribute to the GTP site; these read GRSNVGKS, GRTRA, DLPG, TKTD, and FSA. Serine 39 and threonine 61 together coordinate Mg(2+).

Belongs to the TRAFAC class TrmE-Era-EngA-EngB-Septin-like GTPase superfamily. EngB GTPase family. The cofactor is Mg(2+).

In terms of biological role, necessary for normal cell division and for the maintenance of normal septation. This chain is Probable GTP-binding protein EngB, found in Anaeromyxobacter dehalogenans (strain 2CP-1 / ATCC BAA-258).